Here is a 50-residue protein sequence, read N- to C-terminus: Alpha-conotoxin CnIG (50 aa).

The first 7 residues, 1–7 (LTTTVVS), serve as a signal peptide directing secretion. Residues 1-13 (LTTTVVSFPSDSA) show a composition bias toward polar residues. The disordered stretch occupies residues 1–26 (LTTTVVSFPSDSASDGRDNEAKDERS). The propeptide occupies 8 to 35 (FPSDSASDGRDNEAKDERSDMYELKRNG). The segment covering 14-26 (SDGRDNEAKDERS) has biased composition (basic and acidic residues). Disulfide bonds link Cys37-Cys42 and Cys38-Cys48. Residue Cys48 is modified to Cysteine amide.

The protein belongs to the conotoxin A superfamily. As to expression, expressed by the venom duct.

The protein localises to the secreted. The protein is Alpha-conotoxin CnIG of Conus consors (Singed cone).